A 414-amino-acid chain; its full sequence is Lactosylceramide alpha-2,3-sialyltransferase (414 aa).

Residues 1–65 lie on the Cytoplasmic side of the membrane; that stretch reads MHTEAVGGAA…MRRPSLLIKD (65 aa). A helical; Signal-anchor for type II membrane protein membrane pass occupies residues 66–86; the sequence is ICKCTLVAFGVWLLYILILNY. The Lumenal portion of the chain corresponds to 87–414; it reads TAEECDMKRM…VVEDLSGGIH (328 aa). Cysteines 194 and 352 form a disulfide. N-linked (GlcNAc...) asparagine glycosylation is found at Asn235, Asn279, and Asn389.

It belongs to the glycosyltransferase 29 family. Mainly expressed in brain, and then testis, heart and liver, almost all tissues showed some levels of the gene expression.

Its subcellular location is the golgi apparatus membrane. The catalysed reaction is a beta-D-Gal-(1-&gt;4)-beta-D-Glc-(1&lt;-&gt;1)-Cer(d18:1(4E)) + CMP-N-acetyl-beta-neuraminate = a ganglioside GM3 (d18:1(4E)) + CMP + H(+). The enzyme catalyses ganglioside GA2 (d18:1(4E)/18:0) + CMP-N-acetyl-beta-neuraminate = ganglioside GM2 (d18:1(4E)/18:0) + CMP + H(+). It catalyses the reaction a beta-D-Gal-(1&lt;-&gt;1')-ceramide + CMP-N-acetyl-beta-neuraminate = N-acetyl-alpha-neuraminosyl-(2-&gt;3)-beta-D-galactosyl-(1&lt;-&gt;1')-ceramide + CMP + H(+). It carries out the reaction ganglioside GA1 (d18:1(4E)/18:0) + CMP-N-acetyl-beta-neuraminate = ganglioside GM1 (d18:1(4E)/18:0) + CMP + H(+). In terms of biological role, (Microbial infection) Gangliosides GD1b and GT1b (derived from GM3) may serve as receptors for some C.botulinum neurotoxins (minimally types BoNT/A, B, C). Functionally, transfers the sialyl group (N-acetyl-alpha-neuraminyl or NeuAc) from CMP-NeuAc to the non-reducing terminal galactose (Gal) of glycosphingolipids forming gangliosides (important molecules involved in the regulation of multiple cellular processes, including cell proliferation and differentiation, apoptosis, embryogenesis, development, and oncogenesis). Mainly involved in the biosynthesis of ganglioside GM3 but can also use different glycolipids as substrate acceptors such as D-galactosylceramide (GalCer), asialo-GM2 (GA2) and asialo-GM1 (GA1), although less preferentially than beta-D-Gal-(1-&gt;4)-beta-D-Glc-(1&lt;-&gt;1)-Cer (LacCer). The polypeptide is Lactosylceramide alpha-2,3-sialyltransferase (St3gal5) (Mus musculus (Mouse)).